Consider the following 262-residue polypeptide: MAAPGEALTSSSYITHHLTNLAVGDGGFWTVHIDSLFFSVLTGLAFILVFHSVAKKATSGVPSKLQCFVEMLVEFVDNSVKETFHGRNPLIAPLGLTIFCWIMLMNIMDLIPIDFIPYAAEHALGIPYLKIVPTADVNITMAMALGVFALMLYYSVKVKGLGGFAKELALHPFNHPIMIPFNLLLEVVSLIAKPISLGMRLFGNMFAGEVVFILIAALMPWWAQWLGSVPWAIFHILIITIQAFVFMMLTIVYLAQAHEDNH.

A run of 5 helical transmembrane segments spans residues 30-50, 91-111, 131-151, 201-221, and 232-252; these read TVHI…ILVF, IAPL…MDLI, IVPT…FALM, LFGN…LMPW, and AIFH…LTIV.

This sequence belongs to the ATPase A chain family. In terms of assembly, F-type ATPases have 2 components, CF(1) - the catalytic core - and CF(0) - the membrane proton channel. CF(1) has five subunits: alpha(3), beta(3), gamma(1), delta(1), epsilon(1). CF(0) has three main subunits: a(1), b(2) and c(9-12). The alpha and beta chains form an alternating ring which encloses part of the gamma chain. CF(1) is attached to CF(0) by a central stalk formed by the gamma and epsilon chains, while a peripheral stalk is formed by the delta and b chains.

It localises to the cell inner membrane. Functionally, key component of the proton channel; it plays a direct role in the translocation of protons across the membrane. The protein is ATP synthase subunit a 1 of Photobacterium profundum (strain SS9).